A 92-amino-acid polypeptide reads, in one-letter code: Probable Fe(2+)-trafficking protein (92 aa).

It belongs to the Fe(2+)-trafficking protein family.

In terms of biological role, could be a mediator in iron transactions between iron acquisition and iron-requiring processes, such as synthesis and/or repair of Fe-S clusters in biosynthetic enzymes. This Shewanella frigidimarina (strain NCIMB 400) protein is Probable Fe(2+)-trafficking protein.